Consider the following 23-residue polypeptide: Basic phospholipase A2 CB2 (23 aa).

Ca(2+) serves as cofactor. Post-translationally, contains 7 disulfide bonds. In terms of tissue distribution, expressed by the venom gland.

It is found in the secreted. It catalyses the reaction a 1,2-diacyl-sn-glycero-3-phosphocholine + H2O = a 1-acyl-sn-glycero-3-phosphocholine + a fatty acid + H(+). In terms of biological role, snake venom phospholipase A2 (PLA2) that shows presynaptic neurotoxicity. PLA2 catalyzes the calcium-dependent hydrolysis of the 2-acyl groups in 3-sn-phosphoglycerides. This Crotalus durissus cumanensis (South American rattlesnake) protein is Basic phospholipase A2 CB2.